The following is a 268-amino-acid chain: Homeobox protein CDX-1 (268 aa).

The disordered stretch occupies residues 1–152 (MYVGYVLDKD…AGGGGSGKTR (152 aa)). 2 stretches are compositionally biased toward pro residues: residues 29 to 42 (TYAP…PPQY) and 54 to 67 (APAP…PFPA). Low complexity predominate over residues 73-91 (AAAYGPGPTASAASPAPLA). Pro residues predominate over residues 92–108 (FGPPPDFSPVPAPPGPG). Residues 115 to 128 (SLGAPGAPSSPGAP) are compositionally biased toward low complexity. A DNA-binding region (homeobox) is located at residues 154–213 (KDKYRVVYTDHQRLELEKEFHYSRYITIRRKSELAANLGLTERQVKIWFQNRRAKERKVN). Residues 157 to 178 (YRVVYTDHQRLELEKEFHYSRY) form an interaction with DNA region. The tract at residues 196–207 (RQVKIWFQNRRA) is interaction with 5-mCpG DNA. The segment at 209–268 (ERKVNKKKQQQQQPLPPTQLPLPLDGTPTPSGPPLGSLCPTNAGLLGTPSPVPVKEEFLP) is disordered. Low complexity predominate over residues 229-246 (PLPLDGTPTPSGPPLGSL).

This sequence belongs to the Caudal homeobox family. Intestinal epithelium.

It is found in the nucleus. Its function is as follows. Plays a role in transcriptional regulation. Involved in activated KRAS-mediated transcriptional activation of PRKD1 in colorectal cancer (CRC) cells. Binds to the PRKD1 promoter in colorectal cancer (CRC) cells. Could play a role in the terminal differentiation of the intestine. Binds preferentially to methylated DNA. This chain is Homeobox protein CDX-1 (Cdx1), found in Mus musculus (Mouse).